Consider the following 201-residue polypeptide: Transgelin (201 aa).

Ala2 bears the N-acetylalanine mark. The Calponin-homology (CH) domain occupies 24-137 (EELEERLVEW…RTLMALGSLA (114 aa)). Ser166 carries the post-translational modification Phosphoserine. Lys172 carries the N6-acetyllysine modification. One copy of the Calponin-like repeat lies at 175 to 200 (IGLQMGSNRGASQAGMTGYGRPRQII). Ser181 is modified (phosphoserine). Arg183 is modified (omega-N-methylarginine).

This sequence belongs to the calponin family.

Its subcellular location is the cytoplasm. In terms of biological role, actin cross-linking/gelling protein. The polypeptide is Transgelin (Tagln) (Mus musculus (Mouse)).